The sequence spans 308 residues: tRNA dimethylallyltransferase (308 aa).

16-23 (GPTASGKT) serves as a coordination point for ATP. 18 to 23 (TASGKT) contributes to the substrate binding site. The tract at residues 41-44 (DSQQ) is interaction with substrate tRNA.

This sequence belongs to the IPP transferase family. In terms of assembly, monomer. It depends on Mg(2+) as a cofactor.

It carries out the reaction adenosine(37) in tRNA + dimethylallyl diphosphate = N(6)-dimethylallyladenosine(37) in tRNA + diphosphate. Catalyzes the transfer of a dimethylallyl group onto the adenine at position 37 in tRNAs that read codons beginning with uridine, leading to the formation of N6-(dimethylallyl)adenosine (i(6)A). The sequence is that of tRNA dimethylallyltransferase from Myxococcus xanthus (strain DK1622).